A 338-amino-acid chain; its full sequence is Malate dehydrogenase, mitochondrial (338 aa).

The N-terminal 24 residues, 1 to 24 (MLSALARPAGAALRRSFSTSXQNN), are a transit peptide targeting the mitochondrion. Residues 31–37 (GASGGIG) and D57 each bind NAD(+). A glycan (O-linked (GlcNAc) serine) is linked at S33. N6-acetyllysine; alternate occurs at positions 78 and 91. Residues K78 and K91 each carry the N6-succinyllysine; alternate modification. Positions 104 and 110 each coordinate substrate. Residues N117 and 140–142 (ISN) contribute to the NAD(+) site. Substrate is bound at residue N142. K165 bears the N6-acetyllysine mark. R176 contacts substrate. N6-acetyllysine; alternate is present on K185. Position 185 is an N6-succinyllysine; alternate (K185). H200 functions as the Proton acceptor in the catalytic mechanism. K203 carries the post-translational modification N6-succinyllysine. 2 positions are modified to N6-acetyllysine; alternate: K215 and K239. N6-succinyllysine; alternate occurs at positions 215 and 239. K239 is subject to N6-malonyllysine; alternate. S246 carries the post-translational modification Phosphoserine. M251 contacts NAD(+). Position 269 is an N6-succinyllysine (K269). An N6-acetyllysine; alternate mark is found at K296, K301, K307, K314, and K324. K296, K301, K307, K314, and K324 each carry N6-succinyllysine; alternate. K307 is subject to N6-malonyllysine; alternate. At S326 the chain carries Phosphoserine. An N6-acetyllysine; alternate mark is found at K328, K329, and K335. K328 carries the post-translational modification N6-succinyllysine; alternate. An N6-malonyllysine; alternate modification is found at K329. K335 bears the N6-succinyllysine; alternate mark.

The protein belongs to the LDH/MDH superfamily. MDH type 1 family. Homodimer. Post-translationally, acetylation is enhanced after treatment either with trichostin A (TCA) or with nicotinamide (NAM) with the appearance of tri- and tetraacetylations. Glucose also increases acetylation.

It localises to the mitochondrion matrix. The catalysed reaction is (S)-malate + NAD(+) = oxaloacetate + NADH + H(+). Enzyme activity is enhanced by acetylation. The protein is Malate dehydrogenase, mitochondrial (MDH2) of Sus scrofa (Pig).